A 412-amino-acid chain; its full sequence is uncharacterized protein (412 aa).

3 disordered regions span residues 150-171 (NTPG…QLGD), 177-196 (QITS…QQQQ), and 302-412 (QAQQ…PLNP). Low complexity predominate over residues 156–168 (QAQQQQQQQQQQQ). 2 stretches are compositionally biased toward polar residues: residues 177–187 (QITSSNNSGNS) and 310–321 (MGSSPTHSSPTI). Residues 335–345 (GGIINTNTNLN) are compositionally biased toward low complexity. Residues 350 to 363 (VSPNQPMPNSSPIL) are compositionally biased toward polar residues. Low complexity-rich tracts occupy residues 364–373 (PTNASSVVPP) and 381–394 (TSNN…TTSP).

This is an uncharacterized protein from Dictyostelium discoideum (Social amoeba).